A 335-amino-acid polypeptide reads, in one-letter code: MDERIISSETVDAEEVSFETSLRPQNLSQYIGQDKVKNNLTVFIEAATLRNEALDHVLLYGPPGLGKTTLAMVIASEMGSQIKTTSGPAIERPGDLATILTSLEPGDVLFIDEIHRLSRAIEEILYPAMEDYCLDIVIGTGPTARSVRLDLPPFTLIGATTRAGLLSAPLRDRFGVIDHLEFYTEEQLTEIVLRTSNILDTKIDDLGAREIARRSRGTPRIANRLLKRVRDFAQVRGNGTVTEKLAKEALTLLQVDPRGLDTIDQKLLHTIIQSFRGGPVGLDTIAASIGEERETIEDMQEPYLLQIGFLQRTPRGRIVTETAYNHLGISYEKEV.

Positions 1-183 (MDERIISSET…FGVIDHLEFY (183 aa)) are large ATPase domain (RuvB-L). Residues Leu-22, Arg-23, Gly-64, Lys-67, Thr-68, Thr-69, 130-132 (EDY), Arg-173, Tyr-183, and Arg-220 contribute to the ATP site. Residue Thr-68 participates in Mg(2+) binding. Positions 184–254 (TEEQLTEIVL…LAKEALTLLQ (71 aa)) are small ATPAse domain (RuvB-S). The head domain (RuvB-H) stretch occupies residues 257–335 (PRGLDTIDQK…HLGISYEKEV (79 aa)). DNA-binding residues include Arg-293, Arg-312, and Arg-317.

Belongs to the RuvB family. In terms of assembly, homohexamer. Forms an RuvA(8)-RuvB(12)-Holliday junction (HJ) complex. HJ DNA is sandwiched between 2 RuvA tetramers; dsDNA enters through RuvA and exits via RuvB. An RuvB hexamer assembles on each DNA strand where it exits the tetramer. Each RuvB hexamer is contacted by two RuvA subunits (via domain III) on 2 adjacent RuvB subunits; this complex drives branch migration. In the full resolvosome a probable DNA-RuvA(4)-RuvB(12)-RuvC(2) complex forms which resolves the HJ.

It is found in the cytoplasm. It catalyses the reaction ATP + H2O = ADP + phosphate + H(+). In terms of biological role, the RuvA-RuvB-RuvC complex processes Holliday junction (HJ) DNA during genetic recombination and DNA repair, while the RuvA-RuvB complex plays an important role in the rescue of blocked DNA replication forks via replication fork reversal (RFR). RuvA specifically binds to HJ cruciform DNA, conferring on it an open structure. The RuvB hexamer acts as an ATP-dependent pump, pulling dsDNA into and through the RuvAB complex. RuvB forms 2 homohexamers on either side of HJ DNA bound by 1 or 2 RuvA tetramers; 4 subunits per hexamer contact DNA at a time. Coordinated motions by a converter formed by DNA-disengaged RuvB subunits stimulates ATP hydrolysis and nucleotide exchange. Immobilization of the converter enables RuvB to convert the ATP-contained energy into a lever motion, pulling 2 nucleotides of DNA out of the RuvA tetramer per ATP hydrolyzed, thus driving DNA branch migration. The RuvB motors rotate together with the DNA substrate, which together with the progressing nucleotide cycle form the mechanistic basis for DNA recombination by continuous HJ branch migration. Branch migration allows RuvC to scan DNA until it finds its consensus sequence, where it cleaves and resolves cruciform DNA. This Listeria monocytogenes serovar 1/2a (strain ATCC BAA-679 / EGD-e) protein is Holliday junction branch migration complex subunit RuvB.